A 998-amino-acid polypeptide reads, in one-letter code: tRNA (34-2'-O)-methyltransferase regulator WDR6 (998 aa).

11 WD repeats span residues 148–185, 200–239, 250–291, 294–333, 476–515, 527–566, 567–608, 664–704, 779–821, 826–865, and 868–911; these read LYYT…ESDP, AHNG…DWTT, GHSS…ILKR, QFGA…NRPK, NNRE…DDFQ, MGSN…STLR, VSQR…LLQL, RNCN…LSQR, ARLM…QLDL, DIQR…TYFQ, and LHVT…VEQK.

This sequence belongs to the WD repeat WDR6 family. Interacts with Trm7-34.

It is found in the cytoplasm. Functionally, together with methyltransferase Trm7-34, methylates the 2'-O-ribose of nucleotides at position 34 of the anticodon loop of substrate tRNAs. This Drosophila melanogaster (Fruit fly) protein is tRNA (34-2'-O)-methyltransferase regulator WDR6.